A 157-amino-acid chain; its full sequence is Ribonuclease H (157 aa).

An RNase H type-1 domain is found at 5-146; that stretch reads IMKQVEIFTD…CDDLARTAAE (142 aa). Mg(2+)-binding residues include Asp-14, Glu-52, Asp-74, and Asp-138.

It belongs to the RNase H family. As to quaternary structure, monomer. Requires Mg(2+) as cofactor.

The protein localises to the cytoplasm. The enzyme catalyses Endonucleolytic cleavage to 5'-phosphomonoester.. Its function is as follows. Endonuclease that specifically degrades the RNA of RNA-DNA hybrids. The chain is Ribonuclease H from Aliivibrio salmonicida (strain LFI1238) (Vibrio salmonicida (strain LFI1238)).